Here is a 72-residue protein sequence, read N- to C-terminus: Translation initiation factor IF-1 (72 aa).

The 72-residue stretch at 1–72 (MAKEEAIEVE…TRGRIIFRER (72 aa)) folds into the S1-like domain.

Belongs to the IF-1 family. In terms of assembly, component of the 30S ribosomal translation pre-initiation complex which assembles on the 30S ribosome in the order IF-2 and IF-3, IF-1 and N-formylmethionyl-tRNA(fMet); mRNA recruitment can occur at any time during PIC assembly.

The protein resides in the cytoplasm. In terms of biological role, one of the essential components for the initiation of protein synthesis. Stabilizes the binding of IF-2 and IF-3 on the 30S subunit to which N-formylmethionyl-tRNA(fMet) subsequently binds. Helps modulate mRNA selection, yielding the 30S pre-initiation complex (PIC). Upon addition of the 50S ribosomal subunit IF-1, IF-2 and IF-3 are released leaving the mature 70S translation initiation complex. The chain is Translation initiation factor IF-1 from Treponema denticola (strain ATCC 35405 / DSM 14222 / CIP 103919 / JCM 8153 / KCTC 15104).